The sequence spans 550 residues: Chaperonin GroEL (550 aa).

Residues 29–32 (TLGP), Lys-50, 86–90 (DGTTT), Gly-414, and Asp-495 contribute to the ATP site.

It belongs to the chaperonin (HSP60) family. Forms a cylinder of 14 subunits composed of two heptameric rings stacked back-to-back. Interacts with the co-chaperonin GroES.

It is found in the cytoplasm. The catalysed reaction is ATP + H2O + a folded polypeptide = ADP + phosphate + an unfolded polypeptide.. Its function is as follows. Together with its co-chaperonin GroES, plays an essential role in assisting protein folding. The GroEL-GroES system forms a nano-cage that allows encapsulation of the non-native substrate proteins and provides a physical environment optimized to promote and accelerate protein folding. The sequence is that of Chaperonin GroEL from Parvibaculum lavamentivorans (strain DS-1 / DSM 13023 / NCIMB 13966).